A 511-amino-acid chain; its full sequence is Sulfate adenylyltransferase (511 aa).

Residues Met1 to Tyr167 form an N-terminal region. The catalytic stretch occupies residues Asp168 to Lys393. Gln195 lines the sulfate pocket. Residues Gln195–Asn198 and Gly289–His292 contribute to the ATP site. Active-site residues include Thr196, Arg197, and Asn198. Sulfate is bound at residue Arg197. Ala293 provides a ligand contact to sulfate. ATP is bound at residue Val331. Residues Gln394–Phe511 form a required for oligomerization; adenylyl-sulfate kinase-like region.

Belongs to the sulfate adenylyltransferase family. Homohexamer. Dimer of trimers.

Its subcellular location is the cytoplasm. The catalysed reaction is sulfate + ATP + H(+) = adenosine 5'-phosphosulfate + diphosphate. Its pathway is sulfur metabolism; hydrogen sulfide biosynthesis; sulfite from sulfate: step 1/3. Catalyzes the first intracellular reaction of sulfate assimilation, forming adenosine-5'-phosphosulfate (APS) from inorganic sulfate and ATP. Plays an important role in sulfate activation as a component of the biosynthesis pathway of sulfur-containing amino acids. The chain is Sulfate adenylyltransferase from Saccharomyces cerevisiae (strain ATCC 204508 / S288c) (Baker's yeast).